Here is a 135-residue protein sequence, read N- to C-terminus: Small ribosomal subunit protein uS12 (135 aa).

Residue aspartate 89 is modified to 3-methylthioaspartic acid. The segment at 108 to 135 (NKRTVSRSKYGTKKAKATDKKATDNKKK) is disordered. A compositionally biased stretch (basic residues) spans 111-122 (TVSRSKYGTKKA). The segment covering 123–135 (KATDKKATDNKKK) has biased composition (basic and acidic residues).

The protein belongs to the universal ribosomal protein uS12 family. As to quaternary structure, part of the 30S ribosomal subunit. Contacts proteins S8 and S17. May interact with IF1 in the 30S initiation complex.

Its function is as follows. With S4 and S5 plays an important role in translational accuracy. Interacts with and stabilizes bases of the 16S rRNA that are involved in tRNA selection in the A site and with the mRNA backbone. Located at the interface of the 30S and 50S subunits, it traverses the body of the 30S subunit contacting proteins on the other side and probably holding the rRNA structure together. The combined cluster of proteins S8, S12 and S17 appears to hold together the shoulder and platform of the 30S subunit. The chain is Small ribosomal subunit protein uS12 from Helicobacter pylori (strain P12).